Consider the following 104-residue polypeptide: Large ribosomal subunit protein uL24 (104 aa).

It belongs to the universal ribosomal protein uL24 family. In terms of assembly, part of the 50S ribosomal subunit.

Functionally, one of two assembly initiator proteins, it binds directly to the 5'-end of the 23S rRNA, where it nucleates assembly of the 50S subunit. One of the proteins that surrounds the polypeptide exit tunnel on the outside of the subunit. The polypeptide is Large ribosomal subunit protein uL24 (Proteus mirabilis (strain HI4320)).